The primary structure comprises 412 residues: Serine hydroxymethyltransferase (412 aa).

Residues Leu117 and 121-123 (GHL) contribute to the (6S)-5,6,7,8-tetrahydrofolate site. Lys226 is modified (N6-(pyridoxal phosphate)lysine). Residues Glu242 and 350 to 352 (SPF) contribute to the (6S)-5,6,7,8-tetrahydrofolate site.

It belongs to the SHMT family. Homodimer. Requires pyridoxal 5'-phosphate as cofactor.

The protein resides in the cytoplasm. It catalyses the reaction (6R)-5,10-methylene-5,6,7,8-tetrahydrofolate + glycine + H2O = (6S)-5,6,7,8-tetrahydrofolate + L-serine. It participates in one-carbon metabolism; tetrahydrofolate interconversion. It functions in the pathway amino-acid biosynthesis; glycine biosynthesis; glycine from L-serine: step 1/1. Catalyzes the reversible interconversion of serine and glycine with tetrahydrofolate (THF) serving as the one-carbon carrier. Also exhibits THF-independent aldolase activity toward beta-hydroxyamino acids, producing glycine and aldehydes, via a retro-aldol mechanism. This is Serine hydroxymethyltransferase from Methanosarcina acetivorans (strain ATCC 35395 / DSM 2834 / JCM 12185 / C2A).